Here is a 396-residue protein sequence, read N- to C-terminus: MMRLTVLGATGSIGDSTLDVVRRHPDKYSVFALTANAQADKLAVLCREFRPKMAVLGSAAAADALRDQLGTEAAGIEICSGTKALEEAAAHPDCDAVMAAIVGAAGLRPTLAAVRAGKRVLLANKEALVMSGALFMDAVREHGATVLPIDSEHNAIFQCLPQQVPQFGRGVSRIVLTASGGPFRTRAVDSLADVTPDQACAHPNWVMGRKISVDSATMMNKGLEVIEAYWLFGVPVEHLEVLIHPQSVIHSMVGYDDGSVLAQLGNPDMRTPIAYGLAYPERIEAGVPLLDLVTTGALTFEAPDLRRFPCLALAFDALRAGGTAPAALNAANEVAVEAFLQRRIRFTEIAAVVGDTLARTSIVPADSLDTVFAADAQARQQAERYIATACAQLPAA.

Residues threonine 10, glycine 11, serine 12, isoleucine 13, glutamine 38, and asparagine 124 each coordinate NADPH. Lysine 125 lines the 1-deoxy-D-xylulose 5-phosphate pocket. Glutamate 126 contributes to the NADPH binding site. Position 150 (aspartate 150) interacts with Mn(2+). 1-deoxy-D-xylulose 5-phosphate-binding residues include serine 151, glutamate 152, serine 179, and histidine 202. Glutamate 152 is a Mn(2+) binding site. Glycine 208 contacts NADPH. 1-deoxy-D-xylulose 5-phosphate contacts are provided by serine 215, asparagine 220, lysine 221, and glutamate 224. Glutamate 224 contacts Mn(2+).

It belongs to the DXR family. Requires Mg(2+) as cofactor. It depends on Mn(2+) as a cofactor.

It catalyses the reaction 2-C-methyl-D-erythritol 4-phosphate + NADP(+) = 1-deoxy-D-xylulose 5-phosphate + NADPH + H(+). Its pathway is isoprenoid biosynthesis; isopentenyl diphosphate biosynthesis via DXP pathway; isopentenyl diphosphate from 1-deoxy-D-xylulose 5-phosphate: step 1/6. Its function is as follows. Catalyzes the NADPH-dependent rearrangement and reduction of 1-deoxy-D-xylulose-5-phosphate (DXP) to 2-C-methyl-D-erythritol 4-phosphate (MEP). The sequence is that of 1-deoxy-D-xylulose 5-phosphate reductoisomerase from Ralstonia pickettii (strain 12J).